The primary structure comprises 260 residues: Taurine import ATP-binding protein TauB (260 aa).

One can recognise an ABC transporter domain in the interval 6–235; sequence AQQVSVVYAS…RYAHGEPVRS (230 aa). 40-47 serves as a coordination point for ATP; sequence GASGCGKS.

Belongs to the ABC transporter superfamily. Taurine importer (TC 3.A.1.17.1) family. In terms of assembly, the complex is composed of two ATP-binding proteins (TauB), two transmembrane proteins (TauC) and a solute-binding protein (TauA).

It is found in the cell inner membrane. The enzyme catalyses taurine(out) + ATP + H2O = taurine(in) + ADP + phosphate + H(+). Part of the ABC transporter complex TauABC involved in taurine import. Responsible for energy coupling to the transport system. In Burkholderia pseudomallei (strain K96243), this protein is Taurine import ATP-binding protein TauB.